We begin with the raw amino-acid sequence, 130 residues long: Small ribosomal subunit protein uS11 (130 aa).

This sequence belongs to the universal ribosomal protein uS11 family. In terms of assembly, part of the 30S ribosomal subunit. Interacts with proteins S7 and S18. Binds to IF-3.

Its function is as follows. Located on the platform of the 30S subunit, it bridges several disparate RNA helices of the 16S rRNA. Forms part of the Shine-Dalgarno cleft in the 70S ribosome. This chain is Small ribosomal subunit protein uS11, found in Bdellovibrio bacteriovorus (strain ATCC 15356 / DSM 50701 / NCIMB 9529 / HD100).